A 295-amino-acid chain; its full sequence is NAD kinase (295 aa).

Asp74 functions as the Proton acceptor in the catalytic mechanism. Residues 74-75, 148-149, Arg176, Asp178, and 189-194 each bind NAD(+); these read DG, NE, and TAYAMS.

It belongs to the NAD kinase family. It depends on a divalent metal cation as a cofactor.

It is found in the cytoplasm. It carries out the reaction NAD(+) + ATP = ADP + NADP(+) + H(+). Involved in the regulation of the intracellular balance of NAD and NADP, and is a key enzyme in the biosynthesis of NADP. Catalyzes specifically the phosphorylation on 2'-hydroxyl of the adenosine moiety of NAD to yield NADP. The chain is NAD kinase from Acidithiobacillus ferrooxidans (strain ATCC 23270 / DSM 14882 / CIP 104768 / NCIMB 8455) (Ferrobacillus ferrooxidans (strain ATCC 23270)).